Reading from the N-terminus, the 166-residue chain is Transcription antitermination protein NusB (166 aa).

Basic and acidic residues predominate over residues 1–18 (MISDESDRFNPRDPKPAD). The disordered stretch occupies residues 1–30 (MISDESDRFNPRDPKPADAGKPSKSAKRRE).

Belongs to the NusB family.

In terms of biological role, involved in transcription antitermination. Required for transcription of ribosomal RNA (rRNA) genes. Binds specifically to the boxA antiterminator sequence of the ribosomal RNA (rrn) operons. This Pseudomonas entomophila (strain L48) protein is Transcription antitermination protein NusB.